Reading from the N-terminus, the 565-residue chain is Dihydroxy-acid dehydratase (565 aa).

Position 80 (D80) interacts with Mg(2+). C121 provides a ligand contact to [2Fe-2S] cluster. D122 and K123 together coordinate Mg(2+). The residue at position 123 (K123) is an N6-carboxylysine. Residue C194 participates in [2Fe-2S] cluster binding. E447 lines the Mg(2+) pocket. Catalysis depends on S473, which acts as the Proton acceptor.

This sequence belongs to the IlvD/Edd family. As to quaternary structure, homodimer. [2Fe-2S] cluster is required as a cofactor. It depends on Mg(2+) as a cofactor.

The catalysed reaction is (2R)-2,3-dihydroxy-3-methylbutanoate = 3-methyl-2-oxobutanoate + H2O. The enzyme catalyses (2R,3R)-2,3-dihydroxy-3-methylpentanoate = (S)-3-methyl-2-oxopentanoate + H2O. The protein operates within amino-acid biosynthesis; L-isoleucine biosynthesis; L-isoleucine from 2-oxobutanoate: step 3/4. It participates in amino-acid biosynthesis; L-valine biosynthesis; L-valine from pyruvate: step 3/4. In terms of biological role, functions in the biosynthesis of branched-chain amino acids. Catalyzes the dehydration of (2R,3R)-2,3-dihydroxy-3-methylpentanoate (2,3-dihydroxy-3-methylvalerate) into 2-oxo-3-methylpentanoate (2-oxo-3-methylvalerate) and of (2R)-2,3-dihydroxy-3-methylbutanoate (2,3-dihydroxyisovalerate) into 2-oxo-3-methylbutanoate (2-oxoisovalerate), the penultimate precursor to L-isoleucine and L-valine, respectively. The protein is Dihydroxy-acid dehydratase of Pelodictyon phaeoclathratiforme (strain DSM 5477 / BU-1).